Consider the following 1060-residue polypeptide: Histone lysine demethylase PHF8 (1060 aa).

A PHD-type zinc finger spans residues 41–92 (PVYCLCRLPYDVTRFMIECDMCQDWFHGSCVGVEEEKAADIDLYHCPNCEVL). Position 69 is a phosphoserine; by CDK1 (Ser69). The disordered stretch occupies residues 100–120 (KRRGSSKGHDTHKGKPVKTGS). The segment at 101–115 (RRGSSKGHDTHKGKP) is linker. Ser120 is modified (phosphoserine; by CDK1). A JmjC domain is found at 231-387 (FSDTRLSNLV…MQLKAYEIEK (157 aa)). Thr280 contacts substrate. Fe cation contacts are provided by His283 and Asp285. Lys300 contributes to the substrate binding site. A Fe cation-binding site is contributed by His355. Positions 508 to 517 (AHSTSVSMSR) are enriched in polar residues. The disordered stretch occupies residues 508-534 (AHSTSVSMSRLSLPSKNGSKKKGLKPK). Ser651 bears the Phosphoserine mark. Tyr704 carries the post-translational modification Phosphotyrosine. A phosphothreonine mark is found at Thr705 and Thr706. A Phosphoserine modification is found at Ser722. 3 disordered regions span residues 768-840 (QSSS…EQDS), 852-902 (YPSL…GTRV), and 915-1046 (KLAQ…KQRL). 2 stretches are compositionally biased toward low complexity: residues 769-778 (SSSSSPATSS) and 785-804 (GGQD…VSNS). Residues Ser804, Ser826, Ser834, Ser854, Ser857, and Ser880 each carry the phosphoserine modification. Positions 826–839 (SEEEEENASLDEQD) are enriched in acidic residues. Over residues 891 to 900 (KQDRPVREGT) the composition is skewed to basic and acidic residues. The segment covering 924 to 934 (AQKKKYIKKKP) has biased composition (basic residues). Polar residues predominate over residues 1018–1030 (RRPSVGSQSNQAG).

Belongs to the JHDM1 histone demethylase family. JHDM1D subfamily. Interacts with POLR1B, UBTF, SETD1A, HCFC1, E2F1 and ZNF711. Interacts with ZNF263; recruited to the SIX3 promoter along with other proteins involved in chromatin modification and transcriptional corepression where it contributes to transcriptional repression. The cofactor is Fe(2+). Post-translationally, phosphorylation at Ser-69 and Ser-120 are required for dissociation from chromatin and accumulation of H4K20Me1 levels during prophase.

The protein localises to the nucleus. It localises to the nucleolus. It catalyses the reaction N(6),N(6)-dimethyl-L-lysyl(36)-[histone H3] + 2 2-oxoglutarate + 2 O2 = L-lysyl(36)-[histone H3] + 2 formaldehyde + 2 succinate + 2 CO2. The enzyme catalyses N(6),N(6)-dimethyl-L-lysyl(9)-[histone H3] + 2 2-oxoglutarate + 2 O2 = L-lysyl(9)-[histone H3] + 2 formaldehyde + 2 succinate + 2 CO2. Histone lysine demethylase with selectivity for the di- and monomethyl states that plays a key role cell cycle progression, rDNA transcription and brain development. Demethylates mono- and dimethylated histone H3 'Lys-9' residue (H3K9Me1 and H3K9Me2), dimethylated H3 'Lys-27' (H3K27Me2) and monomethylated histone H4 'Lys-20' residue (H4K20Me1). Acts as a transcription activator as H3K9Me1, H3K9Me2, H3K27Me2 and H4K20Me1 are epigenetic repressive marks. Involved in cell cycle progression by being required to control G1-S transition. Acts as a coactivator of rDNA transcription, by activating polymerase I (pol I) mediated transcription of rRNA genes. Required for brain development, probably by regulating expression of neuron-specific genes. Only has activity toward H4K20Me1 when nucleosome is used as a substrate and when not histone octamer is used as substrate. May also have weak activity toward dimethylated H3 'Lys-36' (H3K36Me2), however, the relevance of this result remains unsure in vivo. Specifically binds trimethylated 'Lys-4' of histone H3 (H3K4me3), affecting histone demethylase specificity: has weak activity toward H3K9Me2 in absence of H3K4me3, while it has high activity toward H3K9me2 when binding H3K4me3. Positively modulates transcription of histone demethylase KDM5C, acting synergistically with transcription factor ARX; synergy may be related to enrichment of histone H3K4me3 in regulatory elements. The chain is Histone lysine demethylase PHF8 (PHF8) from Homo sapiens (Human).